Consider the following 231-residue polypeptide: 5'-methylthioadenosine/S-adenosylhomocysteine nucleosidase (231 aa).

Glu-12 (proton acceptor) is an active-site residue. Substrate-binding positions include Gly-78, Met-153, and Met-174–Glu-175. The active-site Proton donor is the Asp-198.

This sequence belongs to the PNP/UDP phosphorylase family. MtnN subfamily.

The catalysed reaction is S-adenosyl-L-homocysteine + H2O = S-(5-deoxy-D-ribos-5-yl)-L-homocysteine + adenine. The enzyme catalyses S-methyl-5'-thioadenosine + H2O = 5-(methylsulfanyl)-D-ribose + adenine. It carries out the reaction 5'-deoxyadenosine + H2O = 5-deoxy-D-ribose + adenine. It functions in the pathway amino-acid biosynthesis; L-methionine biosynthesis via salvage pathway; S-methyl-5-thio-alpha-D-ribose 1-phosphate from S-methyl-5'-thioadenosine (hydrolase route): step 1/2. Catalyzes the irreversible cleavage of the glycosidic bond in both 5'-methylthioadenosine (MTA) and S-adenosylhomocysteine (SAH/AdoHcy) to adenine and the corresponding thioribose, 5'-methylthioribose and S-ribosylhomocysteine, respectively. Also cleaves 5'-deoxyadenosine, a toxic by-product of radical S-adenosylmethionine (SAM) enzymes, into 5-deoxyribose and adenine. The sequence is that of 5'-methylthioadenosine/S-adenosylhomocysteine nucleosidase from Bacillus cereus (strain G9842).